The sequence spans 156 residues: Hexachlorocyclohexane dehydrochlorinase 2 (156 aa).

Residue D25 is part of the active site. H73 serves as the catalytic Proton acceptor.

This sequence belongs to the HCH dehydrochlorinase family. Homotrimer.

It is found in the periplasm. It catalyses the reaction gamma-hexachlorocyclohexane = (3R,4S,5S,6R)-pentachlorocyclohexene + chloride + H(+). It carries out the reaction (3R,4S,5S,6R)-pentachlorocyclohexene = (3R,6R)-1,3,4,6-tetrachlorocyclohexa-1,4-diene + chloride + H(+). It functions in the pathway xenobiotic degradation; hexachlorocyclohexane degradation. Catalyzes the conversion of the important environmental pollutant gamma-hexachlorocyclohexane (gamma-HCH or lindane) to 1,3,4,6-tetrachloro-1,4-cyclohexadiene (1,4-TCDN) via gamma-pentachlorocyclohexene (gamma-PCCH). Proceeds by two successive 1,2-anti conformationally dependent dehydrochlorinations. Also shows activity with alpha- and delta-HCH, giving alpha- and delta-PCCH respectively, but not with the beta isomer. The sequence is that of Hexachlorocyclohexane dehydrochlorinase 2 from Sphingobium indicum (strain DSM 16412 / CCM 7286 / MTCC 6364 / B90A).